The sequence spans 352 residues: Pheromone-regulated membrane protein 6 (352 aa).

Over 1–36 (MESSLQKLKFQDIDINLIPTAKWTTKLQYILYTWCQ) the chain is Extracellular. A helical transmembrane segment spans residues 37–57 (SILHVAMFFSDIYTCIKLLAF). The Cytoplasmic portion of the chain corresponds to 58–76 (NTWSNNIIQPFLEFRISKW). A helical transmembrane segment spans residues 77–97 (LFSGCILCSSLILIWELVIGL). At 98–227 (RVYRKKEITS…VILSFMLFSF (130 aa)) the chain is on the extracellular side. The chain crosses the membrane as a helical span at residues 228–248 (IIWVILISKLILSIIIFIIFI). The Cytoplasmic segment spans residues 249-352 (RPRFLSSKRK…FPQKYKHKYI (104 aa)).

It belongs to the KCH1 low affinity K(+) transporter family.

It localises to the cell membrane. Its subcellular location is the bud tip. It is found in the vacuole lumen. It carries out the reaction K(+)(in) = K(+)(out). In terms of biological role, low affinity potassium transporter that, with KCH1, participates in high-affinity Ca(2+) influx system (HACS) activation during the response to mating pheromone. Directly promotes K(+) influx and HACS may electrochemically respond to this K(+) influx. KCH1 and PRM6/KCH2 act at the apex of the calcium signaling pathway that is used for survival during prolonged exposures to mating pheromones. In Saccharomyces cerevisiae (strain ATCC 204508 / S288c) (Baker's yeast), this protein is Pheromone-regulated membrane protein 6.